We begin with the raw amino-acid sequence, 248 residues long: 1-(5-phosphoribosyl)-5-[(5-phosphoribosylamino)methylideneamino] imidazole-4-carboxamide isomerase (248 aa).

The Proton acceptor role is filled by aspartate 17. The active-site Proton donor is aspartate 136.

The protein belongs to the HisA/HisF family.

The protein localises to the cytoplasm. It catalyses the reaction 1-(5-phospho-beta-D-ribosyl)-5-[(5-phospho-beta-D-ribosylamino)methylideneamino]imidazole-4-carboxamide = 5-[(5-phospho-1-deoxy-D-ribulos-1-ylimino)methylamino]-1-(5-phospho-beta-D-ribosyl)imidazole-4-carboxamide. It participates in amino-acid biosynthesis; L-histidine biosynthesis; L-histidine from 5-phospho-alpha-D-ribose 1-diphosphate: step 4/9. The sequence is that of 1-(5-phosphoribosyl)-5-[(5-phosphoribosylamino)methylideneamino] imidazole-4-carboxamide isomerase from Arthrobacter sp. (strain FB24).